We begin with the raw amino-acid sequence, 345 residues long: Biotin synthase (345 aa).

In terms of domain architecture, Radical SAM core spans 67 to 295; that stretch reads YKVQLASLLS…KSRIRLSAGR (229 aa). Positions 82, 86, and 89 each coordinate [4Fe-4S] cluster. Cysteine 126, cysteine 158, cysteine 218, and arginine 290 together coordinate [2Fe-2S] cluster.

The protein belongs to the radical SAM superfamily. Biotin synthase family. In terms of assembly, homodimer. Requires [4Fe-4S] cluster as cofactor. The cofactor is [2Fe-2S] cluster.

The enzyme catalyses (4R,5S)-dethiobiotin + (sulfur carrier)-SH + 2 reduced [2Fe-2S]-[ferredoxin] + 2 S-adenosyl-L-methionine = (sulfur carrier)-H + biotin + 2 5'-deoxyadenosine + 2 L-methionine + 2 oxidized [2Fe-2S]-[ferredoxin]. The protein operates within cofactor biosynthesis; biotin biosynthesis; biotin from 7,8-diaminononanoate: step 2/2. Functionally, catalyzes the conversion of dethiobiotin (DTB) to biotin by the insertion of a sulfur atom into dethiobiotin via a radical-based mechanism. This chain is Biotin synthase, found in Prochlorococcus marinus (strain NATL1A).